A 123-amino-acid chain; its full sequence is Ribosome-binding factor A (123 aa).

The protein belongs to the RbfA family. As to quaternary structure, monomer. Binds 30S ribosomal subunits, but not 50S ribosomal subunits or 70S ribosomes.

Its subcellular location is the cytoplasm. Its function is as follows. One of several proteins that assist in the late maturation steps of the functional core of the 30S ribosomal subunit. Associates with free 30S ribosomal subunits (but not with 30S subunits that are part of 70S ribosomes or polysomes). Required for efficient processing of 16S rRNA. May interact with the 5'-terminal helix region of 16S rRNA. The polypeptide is Ribosome-binding factor A (Ralstonia nicotianae (strain ATCC BAA-1114 / GMI1000) (Ralstonia solanacearum)).